A 350-amino-acid chain; its full sequence is tRNA uridine(34) hydroxylase (350 aa).

The region spanning 146-240 (DDPDALFIDM…YARKAREQGL (95 aa)) is the Rhodanese domain. The Cysteine persulfide intermediate role is filled by Cys200.

This sequence belongs to the TrhO family.

The catalysed reaction is uridine(34) in tRNA + AH2 + O2 = 5-hydroxyuridine(34) in tRNA + A + H2O. Functionally, catalyzes oxygen-dependent 5-hydroxyuridine (ho5U) modification at position 34 in tRNAs, the first step in 5-carboxymethoxyuridine (cmo5U) biosynthesis. May be part of an alternate pathway, which is able to bypass cmo5U biogenesis in a subset of tRNAs under aerobic conditions. In Escherichia coli (strain K12), this protein is tRNA uridine(34) hydroxylase.